A 555-amino-acid polypeptide reads, in one-letter code: CTP synthase (555 aa).

Residues 1–267 (MAKFVFVTGG…CKEVLDCLDL (267 aa)) are amidoligase domain. CTP is bound at residue serine 13. Serine 13 is a UTP binding site. ATP is bound by residues 14-19 (SIGKGI) and aspartate 71. Residues aspartate 71 and glutamate 141 each coordinate Mg(2+). CTP-binding positions include 148 to 150 (DIE), 188 to 193 (KTKPTQ), and lysine 224. UTP is bound by residues 188–193 (KTKPTQ) and lysine 224. In terms of domain architecture, Glutamine amidotransferase type-1 spans 292 to 534 (KVALVGKYVQ…IQAAQIRVPS (243 aa)). Residue glycine 354 coordinates L-glutamine. Cysteine 381 functions as the Nucleophile; for glutamine hydrolysis in the catalytic mechanism. L-glutamine is bound by residues 382–385 (LGMQ), glutamate 405, and arginine 462. Active-site residues include histidine 507 and glutamate 509. The disordered stretch occupies residues 536-555 (PSEAFNPQSKIIEKKSLEQQ). The span at 546–555 (IIEKKSLEQQ) shows a compositional bias: basic and acidic residues.

Belongs to the CTP synthase family. As to quaternary structure, homotetramer.

The catalysed reaction is UTP + L-glutamine + ATP + H2O = CTP + L-glutamate + ADP + phosphate + 2 H(+). It catalyses the reaction L-glutamine + H2O = L-glutamate + NH4(+). It carries out the reaction UTP + NH4(+) + ATP = CTP + ADP + phosphate + 2 H(+). It participates in pyrimidine metabolism; CTP biosynthesis via de novo pathway; CTP from UDP: step 2/2. Allosterically activated by GTP, when glutamine is the substrate; GTP has no effect on the reaction when ammonia is the substrate. The allosteric effector GTP functions by stabilizing the protein conformation that binds the tetrahedral intermediate(s) formed during glutamine hydrolysis. Inhibited by the product CTP, via allosteric rather than competitive inhibition. In terms of biological role, catalyzes the ATP-dependent amination of UTP to CTP with either L-glutamine or ammonia as the source of nitrogen. Regulates intracellular CTP levels through interactions with the four ribonucleotide triphosphates. The polypeptide is CTP synthase (Prochlorococcus marinus (strain NATL1A)).